The following is a 214-amino-acid chain: Large ribosomal subunit protein bL25 (214 aa).

The interval 179-214 is disordered; that stretch reads VPPTQGPSEAEIEEVEAGDADTPEPEVVGEKEEDEE. Over residues 188 to 202 the composition is skewed to acidic residues; it reads AEIEEVEAGDADTPE.

The protein belongs to the bacterial ribosomal protein bL25 family. CTC subfamily. As to quaternary structure, part of the 50S ribosomal subunit; part of the 5S rRNA/L5/L18/L25 subcomplex. Contacts the 5S rRNA. Binds to the 5S rRNA independently of L5 and L18.

Its function is as follows. This is one of the proteins that binds to the 5S RNA in the ribosome where it forms part of the central protuberance. This Staphylococcus carnosus (strain TM300) protein is Large ribosomal subunit protein bL25.